A 111-amino-acid polypeptide reads, in one-letter code: Small ribosomal subunit protein bS16 (111 aa).

The tract at residues 92–111 is disordered; sequence MEVKAKNRKARPSKKEDKEA.

Belongs to the bacterial ribosomal protein bS16 family.

This Rickettsia massiliae (strain Mtu5) protein is Small ribosomal subunit protein bS16.